A 760-amino-acid chain; its full sequence is Semaphorin-4A (760 aa).

A signal peptide spans M1–G32. At T33 to H682 the chain is on the extracellular side. The Sema domain occupies Q36–R494. An intrachain disulfide couples C113 to C124. N120 and N135 each carry an N-linked (GlcNAc...) asparagine glycan. Disulfide bonds link C142–C151, C269–C379, and C293–C339. N496 carries an N-linked (GlcNAc...) asparagine glycan. In terms of domain architecture, PSI spans N496 to T547. 3 disulfide bridges follow: C497/C514, C506/C523, and C579/C623. In terms of domain architecture, Ig-like C2-type spans N572–Y630. N606 carries N-linked (GlcNAc...) asparagine glycosylation. Residues F683–A703 traverse the membrane as a helical segment. The Cytoplasmic portion of the chain corresponds to S704 to A760. A disordered region spans residues M720–A760. The segment covering P723–S744 has biased composition (basic and acidic residues).

The protein belongs to the semaphorin family. In terms of assembly, interacts with PLXNB1, PLXNB2 and PLXNB3. Interacts with PLXND1. Interacts with TIMD2. In terms of tissue distribution, expressed in neurons and glia in the developing hippocampus.

The protein localises to the cell membrane. Its function is as follows. Cell surface receptor for PLXNB1, PLXNB2, PLXNB3 and PLXND1 that plays an important role in cell-cell signaling. Regulates glutamatergic and GABAergic synapse development. Promotes the development of inhibitory synapses in a PLXNB1-dependent manner and promotes the development of excitatory synapses in a PLXNB2-dependent manner. Plays a role in priming antigen-specific T-cells, promotes differentiation of Th1 T-helper cells, and thereby contributes to adaptive immunity. Promotes phosphorylation of TIMD2. Inhibits angiogenesis. Promotes axon growth cone collapse. Inhibits axonal extension by providing local signals to specify territories inaccessible for growing axons. The chain is Semaphorin-4A (Sema4a) from Mus musculus (Mouse).